Consider the following 234-residue polypeptide: Large ribosomal subunit protein uL1c (234 aa).

Belongs to the universal ribosomal protein uL1 family. As to quaternary structure, part of the 50S ribosomal subunit.

Its subcellular location is the plastid. The protein resides in the chloroplast. In terms of biological role, binds directly to 23S rRNA. Might be involved in E site tRNA release (Potential). The sequence is that of Large ribosomal subunit protein uL1c (rpl1) from Guillardia theta (Cryptophyte).